The following is a 533-amino-acid chain: Di/tripeptide-binding protein 4 (533 aa).

An N-terminal signal peptide occupies residues 1-25 (MLHPLLRHLPLALALALCAAGAAQA).

This sequence belongs to the bacterial solute-binding protein 5 family. In terms of assembly, the complex is composed of two ATP-binding proteins (DppD and DppF), two transmembrane proteins (DppB and DppC) and a solute-binding protein (DppA4). Five orthologous SBPs (DppA1-A5) are present in P.aeruginosa, which increases the substrate specificity of the DppBCDF transporter.

Part of the ABC transporter DppABCDF involved in the uptake of various di/tripeptides. Prefers dipeptides with acidic residues at the C-terminal end. Efficiently uses tripeptides. This Pseudomonas aeruginosa (strain UCBPP-PA14) protein is Di/tripeptide-binding protein 4.